The primary structure comprises 437 residues: Serine--tRNA ligase (437 aa).

244-246 contributes to the L-serine binding site; that stretch reads TAE. Residue 275 to 277 coordinates ATP; the sequence is RSE. An L-serine-binding site is contributed by E298. Position 362–365 (362–365) interacts with ATP; sequence EISS. S397 contributes to the L-serine binding site.

It belongs to the class-II aminoacyl-tRNA synthetase family. Type-1 seryl-tRNA synthetase subfamily. As to quaternary structure, homodimer. The tRNA molecule binds across the dimer.

Its subcellular location is the cytoplasm. The catalysed reaction is tRNA(Ser) + L-serine + ATP = L-seryl-tRNA(Ser) + AMP + diphosphate + H(+). It catalyses the reaction tRNA(Sec) + L-serine + ATP = L-seryl-tRNA(Sec) + AMP + diphosphate + H(+). The protein operates within aminoacyl-tRNA biosynthesis; selenocysteinyl-tRNA(Sec) biosynthesis; L-seryl-tRNA(Sec) from L-serine and tRNA(Sec): step 1/1. In terms of biological role, catalyzes the attachment of serine to tRNA(Ser). Is also able to aminoacylate tRNA(Sec) with serine, to form the misacylated tRNA L-seryl-tRNA(Sec), which will be further converted into selenocysteinyl-tRNA(Sec). The polypeptide is Serine--tRNA ligase (Nitrosomonas europaea (strain ATCC 19718 / CIP 103999 / KCTC 2705 / NBRC 14298)).